The sequence spans 525 residues: Cytochrome P450 CYP72A613 (525 aa).

Residues 2–22 traverse the membrane as a helical segment; sequence VFLFPTGTIIIWVLTILLAVI. Cys-473 is a heme binding site.

The protein belongs to the cytochrome P450 family. Mainly expressed in leaves and seed pods and, to a lower extent, in flowers and stems.

It localises to the membrane. It participates in steroid metabolism; cholesterol metabolism. In terms of biological role, involved in the biosynthesis of spiroketal steroid and saponin natural products from cholesterol such as diosgenin and analogs (e.g. furostanol and spirostanol), plant defense compounds used as main precursors for the industrial production of steroid hormones. During the 5,6-spiroketalization of cholesterol, may catalyze the 27-monohydroxylation of furostanol-type steroid to an intermediate product that undergoes a stereospecific formation of the terminal heterocycle to yield diosgenin. The protein is Cytochrome P450 CYP72A613 of Trigonella foenum-graecum (Fenugreek).